The following is a 1071-amino-acid chain: Exportin-1 (1071 aa).

In terms of domain architecture, Importin N-terminal spans 46–112; sequence AQEVLTHLKE…KKYVVGLIIK (67 aa). 6 HEAT repeats span residues 217–240, 241–277, 354–472, 515–553, 560–597, and 602–639; these read QNAPLVHATLETLLRFLNWIPLGY, IFETKLISTLIYKFLNVPMFRNVSLKCLTEIAGVSVS, MLLV…YVDT, RFLVTVIKDLLGLCEQKRGKDNKAIIASNIMYIVGQYPR, KFLKTVVNKLFEFMHETHDGVQDMACDTFIKIAQKCRR, and VQVGEVMPFIDEILNNINTIICDLQPQQVHTFYEAVGY. Residues 327-450 are necessary for interaction with Ran and nuclear export complex formation; sequence CTFLKEHGQL…VREFMKDTDS (124 aa). At S391 the chain carries Phosphoserine. The interval 411–481 is necessary for interaction with RANBP3; the sequence is TVLSKVRLLM…TEIIMTKKLQ (71 aa). K446 carries the N6-acetyllysine modification. T448 carries the phosphothreonine modification. S450 is subject to Phosphoserine. Position 454 is a phosphotyrosine (Y454). K693 bears the N6-acetyllysine mark. HEAT repeat units lie at residues 775–813, 885–916, 917–954, and 1002–1039; these read NFVPPLLDAVLIDYQRNVPAAREPEVLSTMAIIVNKLGG, TMRNVADTGLQILFTLLQNVAQEEAAAQSFYQ, TYFCDILQHIFSVVTDTSHTAGLTMHASILAYMFNLVE, and FSLNQDIPAFKEHLRDFLVQIKEFAGEDTSDLFLEERE. S1031 carries the post-translational modification Phosphoserine.

Belongs to the exportin family. As to quaternary structure, found in a U snRNA export complex with PHAX/RNUXA, NCBP1/CBP80, NCBP2/CBP20, RAN, XPO1 and m7G-capped RNA. Component of a nuclear export receptor complex composed of KPNB1, RAN, SNUPN and XPO1. Found in a trimeric export complex with SNUPN, RAN and XPO1. Found in a nuclear export complex with RANBP3 and RAN. Found in a 60S ribosomal subunit export complex with NMD3, RAN, XPO1. Interacts with DDX3X, NMD3, NUP42, NUP88, NUP214, RANBP3 and TERT. Interacts with NEMF (via its N-terminus). Interacts with the monomeric form of BIRC5/survivin deacetylated at 'Lys-129'. Interacts with SERTAD2; the interaction translocates SERTAD2 out of the nucleus. Interacts with ATF2. Interacts with SLC35G1 and STIM1. Interacts with DCAF8. Interacts with DTNBP1 and the interaction translocates DTNBP1 out of the nucleus. Interacts with CPEB3. Interacts with HAX1. Interacts with BOK; translocates to the cytoplasm. Interacts with HSP90AB1. Interacts with LRPPRC; interacts with LRPPRC alone and also when LRPPRC is in complex with EIF4E and with EIF4E sensitivity element (4ESE)-containing mRNAs to form an EIF4E-dependent mRNA export complex.

It localises to the cytoplasm. The protein resides in the nucleus. The protein localises to the nucleoplasm. Its subcellular location is the cajal body. It is found in the nucleolus. Its function is as follows. Mediates the nuclear export of cellular proteins (cargos) bearing a leucine-rich nuclear export signal (NES) and of RNAs. In the nucleus, in association with RANBP3, binds cooperatively to the NES on its target protein and to the GTPase Ran in its active GTP-bound form. Docking of this complex to the nuclear pore complex (NPC) is mediated through binding to nucleoporins. Upon transit of a nuclear export complex into the cytoplasm, disassembling of the complex and hydrolysis of Ran-GTP to Ran-GDP (induced by RANBP1 and RANGAP1, respectively) cause release of the cargo from the export receptor. The directionality of nuclear export is thought to be conferred by an asymmetric distribution of the GTP- and GDP-bound forms of Ran between the cytoplasm and nucleus. Involved in U3 snoRNA transport from Cajal bodies to nucleoli. Binds to late precursor U3 snoRNA bearing a TMG cap. In Mus musculus (Mouse), this protein is Exportin-1 (Xpo1).